Here is a 437-residue protein sequence, read N- to C-terminus: Ribosomal protein uS12 methylthiotransferase RimO (437 aa).

An MTTase N-terminal domain is found at 9-125 (PAIFLLSLGC…VLAAIGAHYC (117 aa)). The [4Fe-4S] cluster site is built by C18, C54, C88, C149, C153, and C156. A Radical SAM core domain is found at 135-364 (LTPPHYAFLK…MELQESIAAS (230 aa)). The TRAM domain occupies 367 to 434 (RKLEGQTLTV…AYELFGRVGS (68 aa)).

It belongs to the methylthiotransferase family. RimO subfamily. It depends on [4Fe-4S] cluster as a cofactor.

It is found in the cytoplasm. It catalyses the reaction L-aspartate(89)-[ribosomal protein uS12]-hydrogen + (sulfur carrier)-SH + AH2 + 2 S-adenosyl-L-methionine = 3-methylsulfanyl-L-aspartate(89)-[ribosomal protein uS12]-hydrogen + (sulfur carrier)-H + 5'-deoxyadenosine + L-methionine + A + S-adenosyl-L-homocysteine + 2 H(+). Its function is as follows. Catalyzes the methylthiolation of an aspartic acid residue of ribosomal protein uS12. This Chlorobaculum parvum (strain DSM 263 / NCIMB 8327) (Chlorobium vibrioforme subsp. thiosulfatophilum) protein is Ribosomal protein uS12 methylthiotransferase RimO.